Consider the following 119-residue polypeptide: Large ribosomal subunit protein bL20 (119 aa).

It belongs to the bacterial ribosomal protein bL20 family.

Binds directly to 23S ribosomal RNA and is necessary for the in vitro assembly process of the 50S ribosomal subunit. It is not involved in the protein synthesizing functions of that subunit. The sequence is that of Large ribosomal subunit protein bL20 from Burkholderia ambifaria (strain MC40-6).